Reading from the N-terminus, the 994-residue chain is Glutamate [NMDA] receptor subunit 1 (994 aa).

A signal peptide spans 1–23 (MAADGFVYRWLLFGTTIVLLAEA). At 24 to 570 (AQRHTASDNP…TLVSFLQPFS (547 aa)) the chain is on the extracellular side. N-linked (GlcNAc...) asparagine glycans are attached at residues Asn255, Asn311, Asn342, Asn394, Asn451, Asn478, and Asn498. Glycine-binding positions include 527–529 (PLT) and Arg534. Residues 571–591 (NTLWILVMVSVHVVALVLYLL) traverse the membrane as a helical segment. Topologically, residues 592 to 648 (DRFSPFGRFKLSHSDSNEEKALNLSSAVWFAWGVLLNSGIGEGTPRSFSARVLGMVW) are cytoplasmic. A helical membrane pass occupies residues 649-669 (AGFAMIIVASYTANLAAFLVL). Residues 670-828 (ERPKTKLSGI…KTPNTLGLKN (159 aa)) are Extracellular-facing. N-linked (GlcNAc...) asparagine glycosylation is present at Asn690. Glycine is bound by residues Ser700 and Asp744. The helical transmembrane segment at 829–849 (MAGVFILVGVGIAGGVGLIII) threads the bilayer. The Cytoplasmic segment spans residues 850 to 994 (EVIYKKHQVK…YTSDVSHLVV (145 aa)). Residues 971–994 (RPQQNMLPPRYSPGYTSDVSHLVV) are disordered. Positions 984-994 (GYTSDVSHLVV) are enriched in polar residues.

The protein belongs to the glutamate-gated ion channel (TC 1.A.10.1) family. Forms a heteromeric NMDA channel with Nmdar2.

The protein resides in the cell membrane. The protein localises to the postsynaptic cell membrane. It localises to the postsynaptic density. Its function is as follows. NMDA receptor subtype of glutamate-gated ion channels with high calcium permeability and voltage-dependent sensitivity to magnesium. Mediated by glycine. This protein plays a key role in synaptic plasticity, synaptogenesis, excitotoxicity, memory acquisition and learning. It mediates neuronal functions in glutamate neurotransmission. Is involved in the cell surface targeting of NMDA receptors. Plays a role in associative learning and in long-term memory consolidation. This chain is Glutamate [NMDA] receptor subunit 1, found in Drosophila ananassae (Fruit fly).